Reading from the N-terminus, the 197-residue chain is Recombination protein RecR (197 aa).

The C4-type zinc finger occupies Cys56–Cys71. Residues Ser79–Pro174 enclose the Toprim domain.

It belongs to the RecR family.

In terms of biological role, may play a role in DNA repair. It seems to be involved in an RecBC-independent recombinational process of DNA repair. It may act with RecF and RecO. The chain is Recombination protein RecR from Paramagnetospirillum magneticum (strain ATCC 700264 / AMB-1) (Magnetospirillum magneticum).